We begin with the raw amino-acid sequence, 361 residues long: 3-dehydroquinate synthase (361 aa).

NAD(+)-binding positions include 72–77 (SGEKEK), 130–131 (TT), Lys-142, and Lys-151. Residues Glu-184, His-247, and His-264 each coordinate Zn(2+).

This sequence belongs to the sugar phosphate cyclases superfamily. Dehydroquinate synthase family. Co(2+) serves as cofactor. Zn(2+) is required as a cofactor. It depends on NAD(+) as a cofactor.

The protein localises to the cytoplasm. The enzyme catalyses 7-phospho-2-dehydro-3-deoxy-D-arabino-heptonate = 3-dehydroquinate + phosphate. The protein operates within metabolic intermediate biosynthesis; chorismate biosynthesis; chorismate from D-erythrose 4-phosphate and phosphoenolpyruvate: step 2/7. Functionally, catalyzes the conversion of 3-deoxy-D-arabino-heptulosonate 7-phosphate (DAHP) to dehydroquinate (DHQ). The sequence is that of 3-dehydroquinate synthase from Bacillus cereus (strain ATCC 10987 / NRS 248).